The chain runs to 20 residues: Brevinin-1ITa (20 aa).

At methionine 8 the chain carries Methionine sulfoxide; partial. An intrachain disulfide couples cysteine 14 to cysteine 20.

This sequence belongs to the frog skin active peptide (FSAP) family. Brevinin subfamily. Expressed by the skin glands.

It localises to the secreted. Antimicrobial peptide active against Gram-positive bacterium S.epidermidis ATCC 12228 (MIC=4 uM), against Gram-negative bacterium E.coli ATCC 25922 (MIC=64 uM) and against yeast C.parapsilosis ATCC 22019 (MIC=16 uM). Has hemolytic and cytotoxic activity. The protein is Brevinin-1ITa of Rana italica (Italian stream frog).